The sequence spans 282 residues: Shikimate kinase (282 aa).

86–96 serves as a coordination point for ATP; that stretch reads PIKSGLSSSSA.

Belongs to the GHMP kinase family. Archaeal shikimate kinase subfamily.

Its subcellular location is the cytoplasm. The catalysed reaction is shikimate + ATP = 3-phosphoshikimate + ADP + H(+). Its pathway is metabolic intermediate biosynthesis; chorismate biosynthesis; chorismate from D-erythrose 4-phosphate and phosphoenolpyruvate: step 5/7. This Methanocaldococcus jannaschii (strain ATCC 43067 / DSM 2661 / JAL-1 / JCM 10045 / NBRC 100440) (Methanococcus jannaschii) protein is Shikimate kinase (aroK).